A 126-amino-acid polypeptide reads, in one-letter code: Fluoride-specific ion channel FluC (126 aa).

Transmembrane regions (helical) follow at residues 6 to 26, 36 to 56, 69 to 89, and 99 to 119; these read FVAV…FAVL, YGTL…VGFF, LAIT…SEVV, and WAGL…AFGL. Na(+)-binding residues include glycine 76 and threonine 79.

The protein belongs to the fluoride channel Fluc/FEX (TC 1.A.43) family.

It is found in the cell inner membrane. The catalysed reaction is fluoride(in) = fluoride(out). Its activity is regulated as follows. Na(+) is not transported, but it plays an essential structural role and its presence is essential for fluoride channel function. Functionally, fluoride-specific ion channel. Important for reducing fluoride concentration in the cell, thus reducing its toxicity. The sequence is that of Fluoride-specific ion channel FluC from Cupriavidus necator (strain ATCC 17699 / DSM 428 / KCTC 22496 / NCIMB 10442 / H16 / Stanier 337) (Ralstonia eutropha).